The primary structure comprises 203 residues: Ribonuclease HII (203 aa).

Residues 16 to 203 (ENIACCDEVG…HRKSFLNKIL (188 aa)) form the RNase H type-2 domain. The a divalent metal cation site is built by D22, E23, and D120.

Belongs to the RNase HII family. Mn(2+) is required as a cofactor. It depends on Mg(2+) as a cofactor.

Its subcellular location is the cytoplasm. The catalysed reaction is Endonucleolytic cleavage to 5'-phosphomonoester.. Functionally, endonuclease that specifically degrades the RNA of RNA-DNA hybrids. This Alkaliphilus oremlandii (strain OhILAs) (Clostridium oremlandii (strain OhILAs)) protein is Ribonuclease HII.